The sequence spans 158 residues: Ribonuclease H (158 aa).

In terms of domain architecture, RNase H type-1 spans 3 to 144 (ELKLIHIFTD…CDQLARAAAE (142 aa)). D12, E50, D72, and D136 together coordinate Mg(2+).

Belongs to the RNase H family. Monomer. Requires Mg(2+) as cofactor.

Its subcellular location is the cytoplasm. It carries out the reaction Endonucleolytic cleavage to 5'-phosphomonoester.. Functionally, endonuclease that specifically degrades the RNA of RNA-DNA hybrids. The protein is Ribonuclease H of Shewanella sp. (strain MR-4).